The sequence spans 288 residues: Mycothiol S-conjugate amidase (288 aa).

Zn(2+)-binding residues include histidine 12, aspartate 15, and histidine 142.

It belongs to the MshB deacetylase family. Mca subfamily. As to quaternary structure, monomer. Zn(2+) serves as cofactor.

The catalysed reaction is mycothiol S-conjugate + H2O = an N-acetyl-L-cysteine-S-conjugate + 1D-myo-inositol 2-amino-2-deoxy-alpha-D-glucopyranoside. Its activity is regulated as follows. Partially inhibited by MSH when MSmB is used as substrate. Competitively inhibited by the GlcNAc-cyclohexyl derivative 5-(4-chlorophenyl)-N-((2R,3R,4R,5S,6R)-2-(cyclohexylthio)-tetrahydro-4,5-dihydroxy-6-(hydroxymethyl)-2H-pyran-3-yl)furan-2-carboxamide, which also inhibits MshB. Its function is as follows. A mycothiol (MSH, N-acetyl-cysteinyl-glucosaminyl-inositol) S-conjugate amidase, it recycles conjugated MSH to the N-acetyl cysteine conjugate and the MSH precursor. Involved in MSH-dependent detoxification of a number of alkylating agents and antibiotics. Activity is specific for the mycothiol moiety. Has a low but measurable deacetylation activity on GlcNAc-Ins (N-acetyl-glucosaminyl-inositol), and thus can also directly contribute to the production of MSH. In Mycobacterium tuberculosis (strain ATCC 25618 / H37Rv), this protein is Mycothiol S-conjugate amidase.